Here is a 283-residue protein sequence, read N- to C-terminus: Probable endonuclease 4 (283 aa).

The Zn(2+) site is built by His-69, His-109, Glu-145, Asp-179, His-182, His-216, Asp-229, His-231, and Glu-261.

This sequence belongs to the AP endonuclease 2 family. Requires Zn(2+) as cofactor.

The enzyme catalyses Endonucleolytic cleavage to 5'-phosphooligonucleotide end-products.. Functionally, endonuclease IV plays a role in DNA repair. It cleaves phosphodiester bonds at apurinic or apyrimidinic (AP) sites, generating a 3'-hydroxyl group and a 5'-terminal sugar phosphate. In Campylobacter curvus (strain 525.92), this protein is Probable endonuclease 4.